Consider the following 141-residue polypeptide: Lutropin subunit beta (141 aa).

A signal peptide spans 1-20 (MEMLQGLLLWLLLSVAGVWA). The residue at position 21 (S21) is a Blocked amino end (Ser). Cystine bridges form between C29/C77, C43/C92, C46/C130, C54/C108, C58/C110, and C113/C120. N33 is a glycosylation site (N-linked (GlcNAc...) asparagine).

Belongs to the glycoprotein hormones subunit beta family. In terms of assembly, heterodimer of a common alpha chain and a unique beta chain which confers biological specificity to thyrotropin, lutropin, follitropin and gonadotropin.

The protein localises to the secreted. Functionally, promotes spermatogenesis and ovulation by stimulating the testes and ovaries to synthesize steroids. The chain is Lutropin subunit beta (LHB) from Sus scrofa (Pig).